The following is a 295-amino-acid chain: Bifunctional protein FolD (295 aa).

NADP(+)-binding positions include 166–168 (GRS), Ser191, and Ile232.

This sequence belongs to the tetrahydrofolate dehydrogenase/cyclohydrolase family. As to quaternary structure, homodimer.

The catalysed reaction is (6R)-5,10-methylene-5,6,7,8-tetrahydrofolate + NADP(+) = (6R)-5,10-methenyltetrahydrofolate + NADPH. It catalyses the reaction (6R)-5,10-methenyltetrahydrofolate + H2O = (6R)-10-formyltetrahydrofolate + H(+). It participates in one-carbon metabolism; tetrahydrofolate interconversion. Its function is as follows. Catalyzes the oxidation of 5,10-methylenetetrahydrofolate to 5,10-methenyltetrahydrofolate and then the hydrolysis of 5,10-methenyltetrahydrofolate to 10-formyltetrahydrofolate. The chain is Bifunctional protein FolD from Rhodopseudomonas palustris (strain BisA53).